The chain runs to 148 residues: Respiratory supercomplex factor 1, mitochondrial (148 aa).

In terms of domain architecture, HIG1 spans 9 to 100 (LPSSFDAHPE…QERKQRKEFE (92 aa)). 2 helical membrane-spanning segments follow: residues 36–53 (PLIPIGYAATSYALWRAY) and 72–89 (IYGHAFTLFAIVAGGIYY). Residues 89 to 148 (YGQERKQRKEFEKALQEKQDQEKRDAWLRELEVRDKEDKDWRQRHAAMEMAAKEAEKKMG) are a coiled coil.

This sequence belongs to the RCF1 family. As to quaternary structure, associates with the respiratory chain complex III/complex IV supercomplex.

The protein resides in the mitochondrion membrane. Functionally, cytochrome c oxidase subunit which plays a role in assembly of respiratory supercomplexes. In Ajellomyces dermatitidis (strain ER-3 / ATCC MYA-2586) (Blastomyces dermatitidis), this protein is Respiratory supercomplex factor 1, mitochondrial (RCF1).